We begin with the raw amino-acid sequence, 202 residues long: COMM domain-containing protein 10 (202 aa).

An N-acetylalanine modification is found at Ala-2. One can recognise a COMM domain in the interval Lys-133–Thr-202. Residue Ser-155 is modified to Phosphoserine.

This sequence belongs to the COMM domain-containing protein 10 family. As to quaternary structure, component of the commander complex consisting of the CCC subcomplex and the retriever subcomplex. Component of the CCC (COMMD/CCDC22/CCDC93) subcomplex consisting of COMMD1, COMMD2, COMMD3, COMMD4, COMMD5, COMMD6, COMMD7, COMMD8, COMMD9, COMMD10, CCDC22 and CCDC93; within the complex forms a heterodimer with COMMD5. Interacts with RELA, RELB, NFKB1/p105, NFKB2/p100. Interacts with CCDC22, CCDC93, SCNN1B, CUL1, CUL2, CUL3, CUL4A, CUL4B, CUL7. As to expression, ubiquitous.

It localises to the cytoplasm. Its subcellular location is the nucleus. In terms of biological role, scaffold protein in the commander complex that is essential for endosomal recycling of transmembrane cargos; the commander complex is composed of the CCC subcomplex and the retriever subcomplex. May modulate activity of cullin-RING E3 ubiquitin ligase (CRL) complexes. May down-regulate activation of NF-kappa-B. The polypeptide is COMM domain-containing protein 10 (COMMD10) (Homo sapiens (Human)).